A 416-amino-acid polypeptide reads, in one-letter code: MTGTIPSNSQDPDLVLSARPSAHGRFGRFGGQYVPETLIPALTELEQAAATAWKDESFTKELTQLLKTYVGRETPLYEATRLTKHYERGTVGPRIWLKREDLNHTGAHKINNALGQALLAIRMGKKRIIAETGAGQHGVATATVCARFGLECIIYMGQEDMRRQSLNVFRMKLLGAKVRPVTAGTATLKDATSEAIRDWVTNVETTHYILGSVAGPHPYPMLVRDFHAVIGEEAKKQCLEAFGRSPDVLLACVGGGSNAMGLFHPFIEDRSVRMIGVEAAGDGVHTGRHAATITEGRIGVLHGAMSLLLQDSNGQVQEAHSISAGLDYPGVGPEHSYLKEIGRAEYAAVTDQEALSALQLLSEKEGIIPALETAHALAFLEKLCPTLSSGKEIVINCSGRGDKDVNTVAEKLKTKN.

Lys-109 bears the N6-(pyridoxal phosphate)lysine mark.

Belongs to the TrpB family. Tetramer of two alpha and two beta chains. It depends on pyridoxal 5'-phosphate as a cofactor.

It carries out the reaction (1S,2R)-1-C-(indol-3-yl)glycerol 3-phosphate + L-serine = D-glyceraldehyde 3-phosphate + L-tryptophan + H2O. The protein operates within amino-acid biosynthesis; L-tryptophan biosynthesis; L-tryptophan from chorismate: step 5/5. Its function is as follows. The beta subunit is responsible for the synthesis of L-tryptophan from indole and L-serine. This Prochlorococcus marinus (strain SARG / CCMP1375 / SS120) protein is Tryptophan synthase beta chain.